A 260-amino-acid chain; its full sequence is Thiazole synthase (260 aa).

Lys-96 serves as the catalytic Schiff-base intermediate with DXP. 1-deoxy-D-xylulose 5-phosphate contacts are provided by residues Gly-157, 184 to 185 (AG), and 206 to 207 (NT).

The protein belongs to the ThiG family. In terms of assembly, homotetramer. Forms heterodimers with either ThiH or ThiS.

It is found in the cytoplasm. It catalyses the reaction [ThiS sulfur-carrier protein]-C-terminal-Gly-aminoethanethioate + 2-iminoacetate + 1-deoxy-D-xylulose 5-phosphate = [ThiS sulfur-carrier protein]-C-terminal Gly-Gly + 2-[(2R,5Z)-2-carboxy-4-methylthiazol-5(2H)-ylidene]ethyl phosphate + 2 H2O + H(+). It participates in cofactor biosynthesis; thiamine diphosphate biosynthesis. In terms of biological role, catalyzes the rearrangement of 1-deoxy-D-xylulose 5-phosphate (DXP) to produce the thiazole phosphate moiety of thiamine. Sulfur is provided by the thiocarboxylate moiety of the carrier protein ThiS. In vitro, sulfur can be provided by H(2)S. The chain is Thiazole synthase from Rhodopseudomonas palustris (strain TIE-1).